A 1193-amino-acid chain; its full sequence is Major DNA-binding protein (1193 aa).

Positions 827 to 828 (FW) match the Required for filament formation motif. Positions 1125–1145 (AGGGPAGSAGGPESGGGAGAA) are disordered. The tract at residues 1170–1193 (PTAAALDGGGDGDECAFPAKRLRL) is required for nuclear localization.

Belongs to the herpesviridae major DNA-binding protein family. In terms of assembly, homooligomers. Forms double-helical filaments necessary for the formation of replication compartments within the host nucleus. Interacts with the origin-binding protein. Interacts with the helicase primase complex; this interaction stimulates primer synthesis activity of the helicase-primase complex. Interacts with the DNA polymerase. Interacts with the alkaline exonuclease; this interaction increases its nuclease processivity.

The protein resides in the host nucleus. Functionally, plays several crucial roles in viral infection. Participates in the opening of the viral DNA origin to initiate replication by interacting with the origin-binding protein. May disrupt loops, hairpins and other secondary structures present on ssDNA to reduce and eliminate pausing of viral DNA polymerase at specific sites during elongation. Promotes viral DNA recombination by performing strand-transfer, characterized by the ability to transfer a DNA strand from a linear duplex to a complementary single-stranded DNA circle. Can also catalyze the renaturation of complementary single strands. Additionally, reorganizes the host cell nucleus, leading to the formation of prereplicative sites and replication compartments. This process is driven by the protein which can form double-helical filaments in the absence of DNA. This Tupaiid herpesvirus (strain 2) (TuHV-2) protein is Major DNA-binding protein.